We begin with the raw amino-acid sequence, 623 residues long: NAD-dependent malic enzyme 1, mitochondrial (623 aa).

A mitochondrion-targeting transit peptide spans methionine 1–arginine 38. The active-site Proton donor is tyrosine 143. Arginine 196 contacts NAD(+). Lysine 214 functions as the Proton acceptor in the catalytic mechanism. A divalent metal cation-binding residues include glutamate 285, aspartate 286, and aspartate 309. NAD(+) is bound by residues aspartate 309 and asparagine 464.

It belongs to the malic enzymes family. In terms of assembly, homodimer. Heterodimer of two related subunits in NAD-MEH complex. Interacts with NAD-ME2. It depends on Mg(2+) as a cofactor. The cofactor is Mn(2+). As to expression, expressed in leaves, stems, flowers, and roots (at protein level).

Its subcellular location is the mitochondrion. It catalyses the reaction (S)-malate + NAD(+) = pyruvate + CO2 + NADH. Activated by oxaloacetate (OAA), 2-ketoglutarate, succinate and fumarate as homodimer and by OAA, 2-ketoglutarate, succinate, fumarate and coenzyme A (acetyl-CoA and CoA) as heterodimer NAD-MEH. In terms of biological role, involved in the regulation of sugars and amino acids metabolisms during the night period. This is NAD-dependent malic enzyme 1, mitochondrial (NAD-ME1) from Arabidopsis thaliana (Mouse-ear cress).